We begin with the raw amino-acid sequence, 305 residues long: Sulfate adenylyltransferase subunit 2 1 (305 aa).

Residues 283–305 form a disordered region; sequence RSGRAIDHDQAGSMERKKREGYF.

It belongs to the PAPS reductase family. CysD subfamily. In terms of assembly, heterodimer composed of CysD, the smaller subunit, and CysN.

It catalyses the reaction sulfate + ATP + H(+) = adenosine 5'-phosphosulfate + diphosphate. Its pathway is sulfur metabolism; hydrogen sulfide biosynthesis; sulfite from sulfate: step 1/3. In terms of biological role, with CysN forms the ATP sulfurylase (ATPS) that catalyzes the adenylation of sulfate producing adenosine 5'-phosphosulfate (APS) and diphosphate, the first enzymatic step in sulfur assimilation pathway. APS synthesis involves the formation of a high-energy phosphoric-sulfuric acid anhydride bond driven by GTP hydrolysis by CysN coupled to ATP hydrolysis by CysD. This Chromohalobacter salexigens (strain ATCC BAA-138 / DSM 3043 / CIP 106854 / NCIMB 13768 / 1H11) protein is Sulfate adenylyltransferase subunit 2 1.